The chain runs to 340 residues: Uroporphyrinogen decarboxylase (340 aa).

Substrate is bound by residues 21–25, Asp71, Tyr147, Ser202, and His316; that span reads RQAGR.

The protein belongs to the uroporphyrinogen decarboxylase family. As to quaternary structure, homodimer.

Its subcellular location is the cytoplasm. The catalysed reaction is uroporphyrinogen III + 4 H(+) = coproporphyrinogen III + 4 CO2. It functions in the pathway porphyrin-containing compound metabolism; protoporphyrin-IX biosynthesis; coproporphyrinogen-III from 5-aminolevulinate: step 4/4. Functionally, catalyzes the decarboxylation of four acetate groups of uroporphyrinogen-III to yield coproporphyrinogen-III. The chain is Uroporphyrinogen decarboxylase from Nitratiruptor sp. (strain SB155-2).